Consider the following 412-residue polypeptide: CCA-adding enzyme (412 aa).

ATP is bound by residues serine 41 and lysine 44. 2 residues coordinate CTP: serine 41 and lysine 44. Aspartate 53, aspartate 55, and aspartate 106 together coordinate Mg(2+). Histidine 129, lysine 149, and tyrosine 158 together coordinate ATP. 3 residues coordinate CTP: histidine 129, lysine 149, and tyrosine 158.

Belongs to the tRNA nucleotidyltransferase/poly(A) polymerase family. Archaeal CCA-adding enzyme subfamily. Homodimer. The cofactor is Mg(2+).

It carries out the reaction a tRNA precursor + 2 CTP + ATP = a tRNA with a 3' CCA end + 3 diphosphate. It catalyses the reaction a tRNA with a 3' CCA end + 2 CTP + ATP = a tRNA with a 3' CCACCA end + 3 diphosphate. Functionally, catalyzes the addition and repair of the essential 3'-terminal CCA sequence in tRNAs without using a nucleic acid template. Adds these three nucleotides in the order of C, C, and A to the tRNA nucleotide-73, using CTP and ATP as substrates and producing inorganic pyrophosphate. tRNA 3'-terminal CCA addition is required both for tRNA processing and repair. Also involved in tRNA surveillance by mediating tandem CCA addition to generate a CCACCA at the 3' terminus of unstable tRNAs. While stable tRNAs receive only 3'-terminal CCA, unstable tRNAs are marked with CCACCA and rapidly degraded. This Saccharolobus islandicus (strain Y.N.15.51 / Yellowstone #2) (Sulfolobus islandicus) protein is CCA-adding enzyme.